The sequence spans 871 residues: DNA mismatch repair protein MutS (871 aa).

An ATP-binding site is contributed by 618–625 (GPNMSGKS).

It belongs to the DNA mismatch repair MutS family.

In terms of biological role, this protein is involved in the repair of mismatches in DNA. It is possible that it carries out the mismatch recognition step. This protein has a weak ATPase activity. In Christiangramia forsetii (strain DSM 17595 / CGMCC 1.15422 / KT0803) (Gramella forsetii), this protein is DNA mismatch repair protein MutS.